We begin with the raw amino-acid sequence, 206 residues long: Small ribosomal subunit protein uS4 (206 aa).

Residues 96–156 (SRLDNVVYRM…EKSKNQLRIQ (61 aa)) form the S4 RNA-binding domain.

This sequence belongs to the universal ribosomal protein uS4 family. In terms of assembly, part of the 30S ribosomal subunit. Contacts protein S5. The interaction surface between S4 and S5 is involved in control of translational fidelity.

One of the primary rRNA binding proteins, it binds directly to 16S rRNA where it nucleates assembly of the body of the 30S subunit. In terms of biological role, with S5 and S12 plays an important role in translational accuracy. The protein is Small ribosomal subunit protein uS4 of Teredinibacter turnerae (strain ATCC 39867 / T7901).